The sequence spans 369 residues: Transaldolase (369 aa).

The active-site Schiff-base intermediate with substrate is the Lys140.

Belongs to the transaldolase family. Type 2 subfamily.

It is found in the cytoplasm. It carries out the reaction D-sedoheptulose 7-phosphate + D-glyceraldehyde 3-phosphate = D-erythrose 4-phosphate + beta-D-fructose 6-phosphate. The protein operates within carbohydrate degradation; pentose phosphate pathway; D-glyceraldehyde 3-phosphate and beta-D-fructose 6-phosphate from D-ribose 5-phosphate and D-xylulose 5-phosphate (non-oxidative stage): step 2/3. In terms of biological role, transaldolase is important for the balance of metabolites in the pentose-phosphate pathway. The polypeptide is Transaldolase (Parafrankia sp. (strain EAN1pec)).